We begin with the raw amino-acid sequence, 251 residues long: Cholesterol 25-hydroxylase-like protein (251 aa).

A run of 3 helical transmembrane segments spans residues F22–L42, W69–L89, and V108–L128. The Fatty acid hydroxylase domain maps to A113–T247. Positions W126–H130 match the Histidine box-1 motif. Positions H141–H145 match the Histidine box-2 motif. The short motif at H222 to Q228 is the Histidine box-3 element.

Belongs to the sterol desaturase family. Requires Fe cation as cofactor.

Its subcellular location is the endoplasmic reticulum membrane. The enzyme catalyses cholesterol + AH2 + O2 = 25-hydroxycholesterol + A + H2O. It carries out the reaction cholesterol + NADPH + O2 + H(+) = 25-hydroxycholesterol + NADP(+) + H2O. Catalyzes the formation of 25-hydroxycholesterol from cholesterol, leading to repress cholesterol biosynthetic enzymes. Plays a key role in cell positioning and movement in lymphoid tissues: 25-hydroxycholesterol is an intermediate in biosynthesis of 7-alpha,25-dihydroxycholesterol (7-alpha,25-OHC), an oxysterol that acts as a ligand for the G protein-coupled receptor GPR183/EBI2, a chemotactic receptor for a number of lymphoid cells. May play an important role in regulating lipid metabolism by synthesizing a corepressor that blocks sterol regulatory element binding protein (SREBP) processing. In testis, production of 25-hydroxycholesterol by macrophages may play a role in Leydig cell differentiation. This chain is Cholesterol 25-hydroxylase-like protein (ch25h), found in Danio rerio (Zebrafish).